The sequence spans 181 residues: HGPRTase-like protein 2 (181 aa).

Belongs to the purine/pyrimidine phosphoribosyltransferase family. Archaeal HPRT subfamily.

May catalyze a purine salvage reaction, the substrate is unknown. The sequence is that of HGPRTase-like protein 2 from Haloterrigena turkmenica (strain ATCC 51198 / DSM 5511 / JCM 9101 / NCIMB 13204 / VKM B-1734 / 4k) (Halococcus turkmenicus).